The following is a 314-amino-acid chain: MKETVGNKIVLIGAGDVGVAYAYALINQGMADHLAIIDIDEKKLEGNVMDLNHGVVWADSRTRVTKGTYADCEDAAMVVICAGAAQKPGETRLQLVDKNVKIMKSIVGDVMDSGFDGIFLVASNPVDILTYAVWKFSGLEWNRVIGSGTVLDSARFRYMLGELYEVAPSSVHAYIIGEHGDTELPVLSSATIAGVSLSRMLDKDPELEGRLEKIFEDTRDAAYHIIDAKGSTSYGIGMGLARITRAILQNQDVAVPVSALLHGEYGEEDIYIGTPAVVNRRGIRRVVELEITDHEMERFKHSANTLREIQKQFF.

Residues Val-17, Asp-38, Lys-43, Tyr-69, and 83 to 84 (GA) contribute to the NAD(+) site. Residues Gln-86 and Arg-92 each contribute to the substrate site. NAD(+) contacts are provided by residues Ser-105, 122–124 (ASN), and Ser-147. A substrate-binding site is contributed by 124–127 (NPVD). Residue 152-155 (DSAR) participates in substrate binding. Beta-D-fructose 1,6-bisphosphate-binding residues include Arg-157 and His-172. Catalysis depends on His-179, which acts as the Proton acceptor. Tyr-223 carries the phosphotyrosine modification. Residue Thr-232 participates in substrate binding.

The protein belongs to the LDH/MDH superfamily. LDH family. As to quaternary structure, homotetramer.

The protein localises to the cytoplasm. The catalysed reaction is (S)-lactate + NAD(+) = pyruvate + NADH + H(+). Its pathway is fermentation; pyruvate fermentation to lactate; (S)-lactate from pyruvate: step 1/1. Allosterically activated by fructose 1,6-bisphosphate (FBP). In terms of biological role, catalyzes the conversion of lactate to pyruvate. This chain is L-lactate dehydrogenase, found in Corynebacterium glutamicum (strain ATCC 13032 / DSM 20300 / JCM 1318 / BCRC 11384 / CCUG 27702 / LMG 3730 / NBRC 12168 / NCIMB 10025 / NRRL B-2784 / 534).